A 740-amino-acid chain; its full sequence is Anaphase-promoting complex subunit 5 (740 aa).

Phosphoserine is present on Ser180. 13 TPR repeats span residues 194–234 (QKQA…FNPD), 235–285 (FAEA…GRSL), 286–322 (RYAA…SNDH), 323–363 (VCLQ…YLAS), 364–403 (LGIQ…SELI), 404–451 (DISI…TESF), 452–485 (AVAL…FPPN), 486–525 (SQHA…ALNG), 526–565 (IEGV…TEMV), 566–605 (ISVL…QYLA), 606–645 (SETV…VLDK), 646–681 (GRAM…NLSE), and 682–721 (AKNY…CAMI). Thr217 is subject to Phosphothreonine.

It belongs to the APC5 family. In terms of assembly, the mammalian APC/C is composed at least of 14 distinct subunits ANAPC1, ANAPC2, CDC27/APC3, ANAPC4, ANAPC5, CDC16/APC6, ANAPC7, CDC23/APC8, ANAPC10, ANAPC11, CDC26/APC12, ANAPC13, ANAPC15 and ANAPC16 that assemble into a complex of at least 19 chains with a combined molecular mass of around 1.2 MDa; APC/C interacts with FZR1 and FBXO5.

It is found in the nucleus. The protein resides in the cytoplasm. The protein localises to the cytoskeleton. Its subcellular location is the spindle. It functions in the pathway protein modification; protein ubiquitination. Component of the anaphase promoting complex/cyclosome (APC/C), a cell cycle-regulated E3 ubiquitin ligase that controls progression through mitosis and the G1 phase of the cell cycle. The APC/C complex acts by mediating ubiquitination and subsequent degradation of target proteins: it mainly mediates the formation of 'Lys-11'-linked polyubiquitin chains and, to a lower extent, the formation of 'Lys-48'- and 'Lys-63'-linked polyubiquitin chains. The APC/C complex catalyzes assembly of branched 'Lys-11'-/'Lys-48'-linked branched ubiquitin chains on target proteins. This Mus musculus (Mouse) protein is Anaphase-promoting complex subunit 5 (Anapc5).